We begin with the raw amino-acid sequence, 247 residues long: Putative methyltransferase GWCH70_2453 (247 aa).

This sequence belongs to the methyltransferase superfamily.

In terms of biological role, may be a S-adenosyl-L-methionine (SAM)-dependent methyltransferase. The sequence is that of Putative methyltransferase GWCH70_2453 from Geobacillus sp. (strain WCH70).